Reading from the N-terminus, the 91-residue chain is Non-specific lipid-transfer protein 1 (91 aa).

Cystine bridges form between cysteine 4-cysteine 51, cysteine 14-cysteine 28, cysteine 29-cysteine 74, and cysteine 49-cysteine 88.

This sequence belongs to the plant LTP family. As to expression, detected in seeds (at protein level).

In terms of biological role, plant non-specific lipid-transfer proteins transfer phospholipids as well as galactolipids across membranes. May play a role in wax or cutin deposition in the cell walls of expanding epidermal cells and certain secretory tissues. This is Non-specific lipid-transfer protein 1 from Carum carvi (Caraway).